The sequence spans 159 residues: Aphid transmission protein (159 aa).

Belongs to the caulimoviridae ORF II family.

In terms of biological role, this protein is involved in virus transmission. The sequence is that of Aphid transmission protein from Cauliflower mosaic virus (strain BBC) (CaMV).